The primary structure comprises 512 residues: MKIRSQVGMVLNLDKCIGCHTCSVTCKNVWTSREGVEYAWFNNVETKPGQGFPTDWENQEKYKGGWIRKINGKLQPRMGNRAMLLGKIFANPHLPGIDDYYEPFDFDYQNLHTAPEGSKSQPIARPRSLITGERMAKIEKGPNWEDDLGGEFDKLAKDKNFDNIQKAMYSQFENTFMMYLPRLCEHCLNPACVATCPSGAIYKREEDGIVLIDQDKCRGWRMCITGCPYKKIYFNWKSGKSEKCIFCYPRIEAGQPTVCSETCVGRIRYLGVLLYDADAIERAASTENEKDLYQRQLDVFLDPNDPKVIEQAIKDGIPLSVIEAAQQSPVYKMAMEWKLALPLHPEYRTLPMVWYVPPLSPIQSAADAGELGSNGILPDVESLRIPVQYLANLLTAGDTKPILRALKRMLAMRHYKRAETVDGKVDTRALEEVGLTEAQAQEMYRYLAIANYEDRFVVPSSHRELAREAFPEKNGCGFTFGDGCHGSDTKFNLFNSRRIDAIDVTSKTEPHP.

4Fe-4S ferredoxin-type domains lie at 7-35, 175-206, and 208-237; these read VGMVLNLDKCIGCHTCSVTCKNVWTSREG, TFMMYLPRLCEHCLNPACVATCPSGAIYKREE, and GIVLIDQDKCRGWRMCITGCPYKKIYFNWK. Residues Cys16, Cys19, Cys22, Cys26, Cys184, Cys187, and Cys192 each coordinate [4Fe-4S] cluster. [3Fe-4S] cluster is bound by residues Cys196, Cys217, and Cys223. Cys227, Cys244, Cys247, Cys259, and Cys263 together coordinate [4Fe-4S] cluster.

As to quaternary structure, dimer of heterotrimers each composed of an alpha, a beta and a gamma chain. Alpha and beta are catalytic chains; gamma chains are involved in binding the enzyme complex to the cytoplasmic membrane. The cofactor is [4Fe-4S] cluster. It depends on [3Fe-4S] cluster as a cofactor.

Its subcellular location is the cell membrane. It catalyses the reaction nitrate + a quinol = a quinone + nitrite + H2O. The nitrate reductase enzyme complex allows S.flexneri to use nitrate as an electron acceptor during anaerobic growth. The beta chain is an electron transfer unit containing four cysteine clusters involved in the formation of iron-sulfur centers. Electrons are transferred from the gamma chain to the molybdenum cofactor of the alpha subunit. The sequence is that of Respiratory nitrate reductase 1 beta chain (narH) from Shigella flexneri.